Consider the following 61-residue polypeptide: Beta-toxin Tce4 (61 aa).

Residues 1–61 enclose the LCN-type CS-alpha/beta domain; the sequence is KEGYLMDHEG…KVWEYATNRC (61 aa). Disulfide bonds link cysteine 11–cysteine 61, cysteine 15–cysteine 37, cysteine 23–cysteine 42, and cysteine 27–cysteine 44. Cysteine amide is present on cysteine 61.

The protein belongs to the long (4 C-C) scorpion toxin superfamily. Sodium channel inhibitor family. Beta subfamily. Expressed by the venom gland.

It localises to the secreted. Its function is as follows. Beta toxins bind voltage-independently at site-4 of sodium channels (Nav) and shift the voltage of activation toward more negative potentials thereby affecting sodium channel activation and promoting spontaneous and repetitive firing. In Tityus cerroazul (Scorpion), this protein is Beta-toxin Tce4.